The chain runs to 349 residues: Putative nuclease HARBI1 (349 aa).

Residues 148–300 (VDCMHVAIKA…IILACCVLHN (153 aa)) form the DDE Tnp4 domain. A divalent metal cation-binding residues include D149, D199, D225, and E261.

Belongs to the HARBI1 family. Interacts with NAIF1. Requires a divalent metal cation as cofactor. In terms of tissue distribution, detected in brain.

The protein resides in the nucleus. It is found in the cytoplasm. In terms of biological role, transposase-derived protein that may have nuclease activity (Potential). Does not have transposase activity. The sequence is that of Putative nuclease HARBI1 (HARBI1) from Bos taurus (Bovine).